A 334-amino-acid chain; its full sequence is 6-phosphogluconolactonase (334 aa).

The protein belongs to the cycloisomerase 2 family.

The catalysed reaction is 6-phospho-D-glucono-1,5-lactone + H2O = 6-phospho-D-gluconate + H(+). It participates in carbohydrate degradation; pentose phosphate pathway; D-ribulose 5-phosphate from D-glucose 6-phosphate (oxidative stage): step 2/3. Functionally, catalyzes the hydrolysis of 6-phosphogluconolactone to 6-phosphogluconate. The sequence is that of 6-phosphogluconolactonase from Buchnera aphidicola subsp. Acyrthosiphon pisum (strain APS) (Acyrthosiphon pisum symbiotic bacterium).